The chain runs to 703 residues: Elongation factor G 1 (703 aa).

Positions 8 to 290 (ERYRNIGISA…AVIDFLPSPV (283 aa)) constitute a tr-type G domain. GTP contacts are provided by residues 17-24 (AHIDAGKT), 88-92 (DTPGH), and 142-145 (NKMD).

Belongs to the TRAFAC class translation factor GTPase superfamily. Classic translation factor GTPase family. EF-G/EF-2 subfamily.

The protein localises to the cytoplasm. In terms of biological role, catalyzes the GTP-dependent ribosomal translocation step during translation elongation. During this step, the ribosome changes from the pre-translocational (PRE) to the post-translocational (POST) state as the newly formed A-site-bound peptidyl-tRNA and P-site-bound deacylated tRNA move to the P and E sites, respectively. Catalyzes the coordinated movement of the two tRNA molecules, the mRNA and conformational changes in the ribosome. This chain is Elongation factor G 1, found in Ralstonia nicotianae (strain ATCC BAA-1114 / GMI1000) (Ralstonia solanacearum).